The following is a 219-amino-acid chain: Small ribosomal subunit protein uS3 (219 aa).

In terms of domain architecture, KH type-2 spans 38–106 (IRTYLKKKLY…KLNLEIKEIK (69 aa)).

This sequence belongs to the universal ribosomal protein uS3 family. Part of the 30S ribosomal subunit. Forms a tight complex with proteins S10 and S14.

Binds the lower part of the 30S subunit head. Binds mRNA in the 70S ribosome, positioning it for translation. The sequence is that of Small ribosomal subunit protein uS3 from Lachnoclostridium phytofermentans (strain ATCC 700394 / DSM 18823 / ISDg) (Clostridium phytofermentans).